The sequence spans 525 residues: GMP synthase [glutamine-hydrolyzing] (525 aa).

Positions 9 to 207 (RILILDFGSQ…VRDICQCEAL (199 aa)) constitute a Glutamine amidotransferase type-1 domain. Catalysis depends on Cys-86, which acts as the Nucleophile. Residues His-181 and Glu-183 contribute to the active site. One can recognise a GMPS ATP-PPase domain in the interval 208–400 (WTPAKIIDDA…LGLPYDMLYR (193 aa)). 235 to 241 (SGGVDSS) contributes to the ATP binding site.

As to quaternary structure, homodimer.

It carries out the reaction XMP + L-glutamine + ATP + H2O = GMP + L-glutamate + AMP + diphosphate + 2 H(+). It participates in purine metabolism; GMP biosynthesis; GMP from XMP (L-Gln route): step 1/1. Catalyzes the synthesis of GMP from XMP. This Escherichia coli O127:H6 (strain E2348/69 / EPEC) protein is GMP synthase [glutamine-hydrolyzing].